A 171-amino-acid chain; its full sequence is Secretion monitor (171 aa).

The signal sequence occupies residues 1–36 (MIGILNRWRQFGRRYFWPHLLLGMVAASLGLPTSLN).

The protein belongs to the SecM family.

The protein resides in the cytoplasm. Its subcellular location is the cytosol. The protein localises to the periplasm. Regulates secA expression by translational coupling of the secM secA operon. Translational pausing at a specific Pro residue 5 residues before the end of the protein may allow disruption of a mRNA repressor helix that normally suppresses secA translation initiation. The protein is Secretion monitor of Pectobacterium carotovorum subsp. carotovorum (strain PC1).